The following is a 469-amino-acid chain: Exodeoxyribonuclease 7 large subunit (469 aa).

Belongs to the XseA family. As to quaternary structure, heterooligomer composed of large and small subunits.

It is found in the cytoplasm. The catalysed reaction is Exonucleolytic cleavage in either 5'- to 3'- or 3'- to 5'-direction to yield nucleoside 5'-phosphates.. Bidirectionally degrades single-stranded DNA into large acid-insoluble oligonucleotides, which are then degraded further into small acid-soluble oligonucleotides. The chain is Exodeoxyribonuclease 7 large subunit from Mycoplasma mycoides subsp. mycoides SC (strain CCUG 32753 / NCTC 10114 / PG1).